A 228-amino-acid chain; its full sequence is 3-oxoadipate CoA-transferase subunit A (228 aa).

25 to 31 (GGFGTAG) is a binding site for CoA.

It belongs to the 3-oxoacid CoA-transferase subunit A family. In terms of assembly, heterodimer.

It carries out the reaction 3-oxoadipate + succinyl-CoA = 3-oxoadipyl-CoA + succinate. Its pathway is aromatic compound metabolism; beta-ketoadipate pathway; acetyl-CoA and succinyl-CoA from 3-oxoadipate: step 1/2. The protein is 3-oxoadipate CoA-transferase subunit A (pcaI) of Acinetobacter baylyi (strain ATCC 33305 / BD413 / ADP1).